The following is a 64-amino-acid chain: Alpha-conotoxin-like Ac1.1b (64 aa).

Residues 1–21 form the signal peptide; it reads MGMRMMFTLFLLVVLTTTVVS. Positions 22–47 are excised as a propeptide; sequence FPSDSASDGRDDEAKDERSDMYKSKR. The interval 23–46 is disordered; it reads PSDSASDGRDDEAKDERSDMYKSK. The span at 28–44 shows a compositional bias: basic and acidic residues; it reads SDGRDDEAKDERSDMYK. 2 cysteine pairs are disulfide-bonded: cysteine 51–cysteine 56 and cysteine 52–cysteine 62. A Cysteine amide modification is found at cysteine 62.

This sequence belongs to the conotoxin A superfamily. Expressed by the venom duct.

The protein resides in the secreted. Alpha-conotoxins act on postsynaptic membranes, they bind to the nicotinic acetylcholine receptors (nAChR) and thus inhibit them. The sequence is that of Alpha-conotoxin-like Ac1.1b from Conus achatinus (Little frog cone).